Here is a 120-residue protein sequence, read N- to C-terminus: Large ribosomal subunit protein eL8 (120 aa).

The protein belongs to the eukaryotic ribosomal protein eL8 family. In terms of assembly, part of the 50S ribosomal subunit. Probably part of the RNase P complex.

The protein localises to the cytoplasm. Multifunctional RNA-binding protein that recognizes the K-turn motif in ribosomal RNA, the RNA component of RNase P, box H/ACA, box C/D and box C'/D' sRNAs. This Natronomonas pharaonis (strain ATCC 35678 / DSM 2160 / CIP 103997 / JCM 8858 / NBRC 14720 / NCIMB 2260 / Gabara) (Halobacterium pharaonis) protein is Large ribosomal subunit protein eL8.